Consider the following 367-residue polypeptide: tRNA-specific 2-thiouridylase MnmA (367 aa).

Residues 12-19 and Met-38 contribute to the ATP site; that span reads GMSGGVDS. Positions 98 to 100 are interaction with target base in tRNA; the sequence is NPD. The active-site Nucleophile is the Cys-103. Cysteines 103 and 200 form a disulfide. An ATP-binding site is contributed by Gly-128. The tract at residues 150-152 is interaction with tRNA; it reads KDQ. Cys-200 acts as the Cysteine persulfide intermediate in catalysis. The tract at residues 312–313 is interaction with tRNA; sequence RY.

The protein belongs to the MnmA/TRMU family. In terms of assembly, interacts with TusE.

The protein resides in the cytoplasm. It catalyses the reaction S-sulfanyl-L-cysteinyl-[protein] + uridine(34) in tRNA + AH2 + ATP = 2-thiouridine(34) in tRNA + L-cysteinyl-[protein] + A + AMP + diphosphate + H(+). In terms of biological role, catalyzes the 2-thiolation of uridine at the wobble position (U34) of tRNA(Lys), tRNA(Glu) and tRNA(Gln), leading to the formation of s(2)U34, the first step of tRNA-mnm(5)s(2)U34 synthesis. Sulfur is provided by IscS, via a sulfur-relay system. Binds ATP and its substrate tRNAs. The polypeptide is tRNA-specific 2-thiouridylase MnmA (Blochmanniella pennsylvanica (strain BPEN)).